A 124-amino-acid chain; its full sequence is Succinate dehydrogenase cytochrome b556 subunit (124 aa).

Residues 1–29 are Cytoplasmic-facing; it reads MTKIKQEIYNKRPTSPHLTIYKPQISSTL. The helical transmembrane segment at 30–55 threads the bilayer; sequence SILHRMTGVALFFVVSILVWWLILSK. The Periplasmic portion of the chain corresponds to 56 to 67; the sequence is YDNNYLQLASCC. The chain crosses the membrane as a helical span at residues 68-88; it reads IIKICLVAFSYSWCYHLCNGI. His-83 lines the heme pocket. At 89-103 the chain is on the cytoplasmic side; that stretch reads RHLFWDIGYGFSIKA. Residues 104-124 form a helical membrane-spanning segment; sequence VNITGWCVVVCSILLTMLLWV.

It belongs to the cytochrome b560 family. Part of an enzyme complex containing four subunits: a flavoprotein, an iron-sulfur protein, plus two membrane-anchoring proteins, SdhC and SdhD. The complex can form homotrimers. Heme serves as cofactor.

The protein localises to the cell inner membrane. It functions in the pathway carbohydrate metabolism; tricarboxylic acid cycle. Membrane-anchoring subunit of succinate dehydrogenase (SDH). The sequence is that of Succinate dehydrogenase cytochrome b556 subunit (sdhC) from Rickettsia prowazekii (strain Madrid E).